The sequence spans 332 residues: 1-acyl-sn-glycerol-3-phosphate acyltransferase CHLREDRAFT_174358 (332 aa).

A helical transmembrane segment spans residues 96–116 (FLLSLPLFVTMMVMAPLVLAF). The short motif at 163–168 (HQSFLD) is the HXXXXD motif element. The chain crosses the membrane as a helical span at residues 185–205 (TSNFLIPIIGWSMFLTGHVMI). An EGTR motif motif is present at residues 235-238 (EGTR).

This sequence belongs to the 1-acyl-sn-glycerol-3-phosphate acyltransferase family.

Its subcellular location is the membrane. The enzyme catalyses a 1-acyl-sn-glycero-3-phosphate + an acyl-CoA = a 1,2-diacyl-sn-glycero-3-phosphate + CoA. Its pathway is phospholipid metabolism; CDP-diacylglycerol biosynthesis; CDP-diacylglycerol from sn-glycerol 3-phosphate: step 2/3. Functionally, converts lysophosphatidic acid (LPA) into phosphatidic acid by incorporating an acyl moiety at the sn-2 position of the glycerol backbone. This is 1-acyl-sn-glycerol-3-phosphate acyltransferase CHLREDRAFT_174358 from Chlamydomonas reinhardtii (Chlamydomonas smithii).